The chain runs to 256 residues: Peptidyl-prolyl cis-trans isomerase FKBP19, chloroplastic (256 aa).

Residues 1-29 constitute a chloroplast transit peptide; it reads MASISSFGCFPQSTALAGTSSTTRCRTTV. A thylakoid-targeting transit peptide spans 30 to 88; that stretch reads AARLADQSDDFAPLRSSGGNCGCVNNSGEFDRRKLLVSSVGLLIGALSYDSKDGDFASA. A PPIase FKBP-type domain is found at 135 to 254; that stretch reads GDKVVVDWDG…LFDVELLKIV (120 aa). Ser-164 is subject to Phosphoserine.

It belongs to the FKBP-type PPIase family.

Its subcellular location is the plastid. The protein resides in the chloroplast thylakoid lumen. It carries out the reaction [protein]-peptidylproline (omega=180) = [protein]-peptidylproline (omega=0). In terms of biological role, PPIases accelerate the folding of proteins. It catalyzes the cis-trans isomerization of proline imidic peptide bonds in oligopeptides. This is Peptidyl-prolyl cis-trans isomerase FKBP19, chloroplastic (FKBP19) from Arabidopsis thaliana (Mouse-ear cress).